Here is a 216-residue protein sequence, read N- to C-terminus: ATP synthase subunit 5, mitochondrial (216 aa).

It belongs to the ATPase delta chain family. F-type ATPases have 2 components, CF(1) - the catalytic core - and CF(0) - the membrane proton channel. CF(1) has five subunits: alpha(3), beta(3), gamma(1), delta(1), epsilon(1). CF(0) has three main subunits: a, b and c.

The protein localises to the mitochondrion. Its subcellular location is the mitochondrion inner membrane. Mitochondrial membrane ATP synthase (F(1)F(0) ATP synthase or Complex V) produces ATP from ADP in the presence of a proton gradient across the membrane which is generated by electron transport complexes of the respiratory chain. F-type ATPases consist of two structural domains, F(1) - containing the extramembraneous catalytic core and F(0) - containing the membrane proton channel, linked together by a central stalk and a peripheral stalk. During catalysis, ATP synthesis in the catalytic domain of F(1) is coupled via a rotary mechanism of the central stalk subunits to proton translocation. Part of the complex F(0) domain and the peripheric stalk, which acts as a stator to hold the catalytic alpha(3)beta(3) subcomplex and subunit a/ATP6 static relative to the rotary elements. The chain is ATP synthase subunit 5, mitochondrial (atp5) from Schizosaccharomyces pombe (strain 972 / ATCC 24843) (Fission yeast).